Reading from the N-terminus, the 282-residue chain is Bifunctional protein FolD (282 aa).

NADP(+)-binding positions include 164-166 and S189; that span reads GRS.

It belongs to the tetrahydrofolate dehydrogenase/cyclohydrolase family. Homodimer.

The catalysed reaction is (6R)-5,10-methylene-5,6,7,8-tetrahydrofolate + NADP(+) = (6R)-5,10-methenyltetrahydrofolate + NADPH. The enzyme catalyses (6R)-5,10-methenyltetrahydrofolate + H2O = (6R)-10-formyltetrahydrofolate + H(+). Its pathway is one-carbon metabolism; tetrahydrofolate interconversion. Its function is as follows. Catalyzes the oxidation of 5,10-methylenetetrahydrofolate to 5,10-methenyltetrahydrofolate and then the hydrolysis of 5,10-methenyltetrahydrofolate to 10-formyltetrahydrofolate. The polypeptide is Bifunctional protein FolD (Streptococcus suis (strain 98HAH33)).